The sequence spans 253 residues: Ubiquinone biosynthesis O-methyltransferase (253 aa).

S-adenosyl-L-methionine is bound by residues Arg-41, Gly-72, Asp-93, and Met-136.

The protein belongs to the methyltransferase superfamily. UbiG/COQ3 family.

The enzyme catalyses a 3-demethylubiquinol + S-adenosyl-L-methionine = a ubiquinol + S-adenosyl-L-homocysteine + H(+). It catalyses the reaction a 3-(all-trans-polyprenyl)benzene-1,2-diol + S-adenosyl-L-methionine = a 2-methoxy-6-(all-trans-polyprenyl)phenol + S-adenosyl-L-homocysteine + H(+). Its pathway is cofactor biosynthesis; ubiquinone biosynthesis. In terms of biological role, O-methyltransferase that catalyzes the 2 O-methylation steps in the ubiquinone biosynthetic pathway. The chain is Ubiquinone biosynthesis O-methyltransferase from Chelativorans sp. (strain BNC1).